Consider the following 294-residue polypeptide: MFRRYLSVTKPGIIMGNLISVAGGFLLASRGDINPWLMVATLIGLSLVVASGCAINNVIDRDIDIAMARTRTRVTVTGEMSAMAALCHGVVLGIIGFGLLIAYTTPAAVFFAAFGYFIYVGVYSLYMKRNSVYGTFIGSLSGAVPPVVGYCAVSGEFDMGALILLVMFSLWQMPHSYAIAIFRFKDYQAAGIPVLPVAQGIDKAKRHIVLYIAIYALVVMLLPISGYTGAAFMAVACITSFWWLLMALRGYRRNIDISGWARQVFAFSIINITALSIAMAVDYQSIAPQLLALN.

Helical transmembrane passes span 8–28 (VTKPGIIMGNLISVAGGFLLA), 35–55 (PWLMVATLIGLSLVVASGCAI), 82–102 (AMAALCHGVVLGIIGFGLLIA), 107–127 (AAVFFAAFGYFIYVGVYSLYM), 132–152 (VYGTFIGSLSGAVPPVVGYCA), 162–182 (LILLVMFSLWQMPHSYAIAIF), 208–228 (IVLYIAIYALVVMLLPISGYT), 229–249 (GAAFMAVACITSFWWLLMALR), and 263–283 (QVFAFSIINITALSIAMAVDY).

Belongs to the UbiA prenyltransferase family. Protoheme IX farnesyltransferase subfamily.

The protein localises to the cell inner membrane. The catalysed reaction is heme b + (2E,6E)-farnesyl diphosphate + H2O = Fe(II)-heme o + diphosphate. Its pathway is porphyrin-containing compound metabolism; heme O biosynthesis; heme O from protoheme: step 1/1. Functionally, converts heme B (protoheme IX) to heme O by substitution of the vinyl group on carbon 2 of heme B porphyrin ring with a hydroxyethyl farnesyl side group. The sequence is that of Protoheme IX farnesyltransferase 1 from Pseudoalteromonas translucida (strain TAC 125).